Reading from the N-terminus, the 400-residue chain is Deoxyguanosinetriphosphate triphosphohydrolase-like protein (400 aa).

The HD domain occupies 73 to 215 (RLTHSIEVSQ…AAIADDIAYN (143 aa)).

Belongs to the dGTPase family. Type 2 subfamily.

The polypeptide is Deoxyguanosinetriphosphate triphosphohydrolase-like protein (Bartonella tribocorum (strain CIP 105476 / IBS 506)).